Reading from the N-terminus, the 164-residue chain is UPF0304 protein PM1500 (164 aa).

It belongs to the UPF0304 family.

The chain is UPF0304 protein PM1500 from Pasteurella multocida (strain Pm70).